Here is a 272-residue protein sequence, read N- to C-terminus: Acetylglutamate kinase (272 aa).

Residues 46–47, Arg68, and Asn166 contribute to the substrate site; that span reads GA.

It belongs to the acetylglutamate kinase family. ArgB subfamily.

It is found in the cytoplasm. It catalyses the reaction N-acetyl-L-glutamate + ATP = N-acetyl-L-glutamyl 5-phosphate + ADP. It participates in amino-acid biosynthesis; L-arginine biosynthesis; N(2)-acetyl-L-ornithine from L-glutamate: step 2/4. Catalyzes the ATP-dependent phosphorylation of N-acetyl-L-glutamate. This is Acetylglutamate kinase from Dehalococcoides mccartyi (strain ATCC BAA-2100 / JCM 16839 / KCTC 5957 / BAV1).